A 336-amino-acid polypeptide reads, in one-letter code: Anthranilate phosphoribosyltransferase (336 aa).

5-phospho-alpha-D-ribose 1-diphosphate is bound by residues Gly82, 85–86, Thr90, 92–95, 110–118, and Ser122; these read GD, NVST, and KHGNRSVSS. Gly82 serves as a coordination point for anthranilate. Ser94 lines the Mg(2+) pocket. Asn113 lines the anthranilate pocket. Residue Arg168 coordinates anthranilate. Residues Asp227 and Glu228 each contribute to the Mg(2+) site.

The protein belongs to the anthranilate phosphoribosyltransferase family. In terms of assembly, homodimer. Mg(2+) is required as a cofactor.

The catalysed reaction is N-(5-phospho-beta-D-ribosyl)anthranilate + diphosphate = 5-phospho-alpha-D-ribose 1-diphosphate + anthranilate. Its pathway is amino-acid biosynthesis; L-tryptophan biosynthesis; L-tryptophan from chorismate: step 2/5. Functionally, catalyzes the transfer of the phosphoribosyl group of 5-phosphorylribose-1-pyrophosphate (PRPP) to anthranilate to yield N-(5'-phosphoribosyl)-anthranilate (PRA). The sequence is that of Anthranilate phosphoribosyltransferase from Leptospira borgpetersenii serovar Hardjo-bovis (strain JB197).